Here is a 414-residue protein sequence, read N- to C-terminus: Probable 26S proteasome regulatory subunit 6B (414 aa).

Residue 202-209 (GPPGCGKT) participates in ATP binding.

The protein belongs to the AAA ATPase family.

The protein resides in the cytoplasm. Its subcellular location is the nucleus. Its function is as follows. The 26S proteasome is involved in the ATP-dependent degradation of ubiquitinated proteins. The regulatory (or ATPase) complex confers ATP dependency and substrate specificity to the 26S complex. In Caenorhabditis elegans, this protein is Probable 26S proteasome regulatory subunit 6B (rpt-3).